The sequence spans 509 residues: Bifunctional purine biosynthesis protein PurH (509 aa).

The MGS-like domain maps to 1–144; the sequence is MKRALISVSD…KNYAAVTVVV (144 aa).

Belongs to the PurH family.

It carries out the reaction (6R)-10-formyltetrahydrofolate + 5-amino-1-(5-phospho-beta-D-ribosyl)imidazole-4-carboxamide = 5-formamido-1-(5-phospho-D-ribosyl)imidazole-4-carboxamide + (6S)-5,6,7,8-tetrahydrofolate. The catalysed reaction is IMP + H2O = 5-formamido-1-(5-phospho-D-ribosyl)imidazole-4-carboxamide. Its pathway is purine metabolism; IMP biosynthesis via de novo pathway; 5-formamido-1-(5-phospho-D-ribosyl)imidazole-4-carboxamide from 5-amino-1-(5-phospho-D-ribosyl)imidazole-4-carboxamide (10-formyl THF route): step 1/1. The protein operates within purine metabolism; IMP biosynthesis via de novo pathway; IMP from 5-formamido-1-(5-phospho-D-ribosyl)imidazole-4-carboxamide: step 1/1. In Listeria innocua serovar 6a (strain ATCC BAA-680 / CLIP 11262), this protein is Bifunctional purine biosynthesis protein PurH.